Consider the following 25-residue polypeptide: Css54 (25 aa).

In terms of tissue distribution, expressed by the venom gland.

Its subcellular location is the secreted. The protein localises to the target cell membrane. In terms of biological role, amphipathic peptide that shows antibacterial activity against E.coli (MIC=12.5 ug/ml) and S.aureus (MIC=12.5 ug/ml). Has hemolytic activity against human erythrocytes (25 uM provokes 83% of hemolysis). May act by disrupting the integrity of the bacterial cell membrane. Increases efficacy of antibiotics (ethambutol, pyrazinamide, isoniazid, rifampicin) when tested against S.aureus, probably by facilitating their incorporation into the bacteria. The polypeptide is Css54 (Centruroides suffusus (Durango bark scorpion)).